Consider the following 311-residue polypeptide: Putative S-adenosyl-L-methionine-dependent methyltransferase MSMEG_0095/MSMEI_0092 (311 aa).

Residues D134 and 163 to 164 (DL) each bind S-adenosyl-L-methionine.

Belongs to the UPF0677 family.

Its function is as follows. Exhibits S-adenosyl-L-methionine-dependent methyltransferase activity. The polypeptide is Putative S-adenosyl-L-methionine-dependent methyltransferase MSMEG_0095/MSMEI_0092 (Mycolicibacterium smegmatis (strain ATCC 700084 / mc(2)155) (Mycobacterium smegmatis)).